The following is a 265-amino-acid chain: Enolase-phosphatase E1 (265 aa).

The Mg(2+) site is built by aspartate 18 and glutamate 20. Residues 144 to 145 (SS) and lysine 188 contribute to the substrate site. Residue aspartate 215 participates in Mg(2+) binding.

It belongs to the HAD-like hydrolase superfamily. MasA/MtnC family. As to quaternary structure, monomer. Mg(2+) is required as a cofactor.

Its subcellular location is the cytoplasm. The protein resides in the nucleus. It carries out the reaction 5-methylsulfanyl-2,3-dioxopentyl phosphate + H2O = 1,2-dihydroxy-5-(methylsulfanyl)pent-1-en-3-one + phosphate. The protein operates within amino-acid biosynthesis; L-methionine biosynthesis via salvage pathway; L-methionine from S-methyl-5-thio-alpha-D-ribose 1-phosphate: step 3/6. It participates in amino-acid biosynthesis; L-methionine biosynthesis via salvage pathway; L-methionine from S-methyl-5-thio-alpha-D-ribose 1-phosphate: step 4/6. Functionally, bifunctional enzyme that catalyzes the enolization of 2,3-diketo-5-methylthiopentyl-1-phosphate (DK-MTP-1-P) into the intermediate 2-hydroxy-3-keto-5-methylthiopentenyl-1-phosphate (HK-MTPenyl-1-P), which is then dephosphorylated to form the acireductone 1,2-dihydroxy-3-keto-5-methylthiopentene (DHK-MTPene). This chain is Enolase-phosphatase E1, found in Candida albicans (strain SC5314 / ATCC MYA-2876) (Yeast).